The chain runs to 165 residues: Large ribosomal subunit protein uL11 (165 aa).

S38 is subject to Phosphoserine. A Glycyl lysine isopeptide (Lys-Gly) (interchain with G-Cter in SUMO2) cross-link involves residue K40. Residue K48 forms a Glycyl lysine isopeptide (Lys-Gly) (interchain with G-Cter in ubiquitin) linkage. K54 is modified (N6-acetyllysine). A Glycyl lysine isopeptide (Lys-Gly) (interchain with G-Cter in ubiquitin) cross-link involves residue K83. At S165 the chain carries Phosphoserine.

The protein belongs to the universal ribosomal protein uL11 family. Component of the large ribosomal subunit. Mature ribosomes consist of a small (40S) and a large (60S) subunit. The 40S subunit contains about 33 different proteins and 1 molecule of RNA (18S). The 60S subunit contains about 49 different proteins and 3 molecules of RNA (28S, 5.8S and 5S). Ubiquitinated at Lys-48 and Lys-83 by RNF14 and RNF25 in response to ribosome collisions (ribosome stalling).

The protein resides in the cytoplasm. Component of the large ribosomal subunit. The ribosome is a large ribonucleoprotein complex responsible for the synthesis of proteins in the cell. Binds directly to 26S ribosomal RNA. This Chinchilla lanigera (Long-tailed chinchilla) protein is Large ribosomal subunit protein uL11 (RPL12).